The following is a 534-amino-acid chain: Cytochrome P450 monooxygenase btcB (534 aa).

A glycan (N-linked (GlcNAc...) asparagine) is linked at N20. Residues 41-61 (ALAFLCGALLFGFVYSVFYNL) traverse the membrane as a helical segment. N335, N413, and N431 each carry an N-linked (GlcNAc...) asparagine glycan. Position 484 (C484) interacts with heme.

Belongs to the cytochrome P450 family. Heme is required as a cofactor.

It is found in the membrane. Its pathway is secondary metabolite biosynthesis; terpenoid biosynthesis. Functionally, cytochrome P4590 monooxygenase part of the gene cluster that mediates the biosynthesis of betaestacins. The bifunctional terpene synthase btcA converts isopentenyl diphosphate (IPP) and dimethylallyl diphosphate (DMAPP) into the sesterterpene betaestacin I. The C-terminal prenyltransferase (PT) domain of btcA catalyzes formation of GFPP, whereas the N-terminal terpene cyclase (TC) domain catalyzes the cyclization of GFPP into betaestacin I. The cytochrome P450 monooxygenase btcB oxidizes the C25 methyl group of betaestacin I to yield the carboxylic acid betaestacin IV via the alcohol betaestacin III. The cytochrome P450 monooxygenase btcC further catalyzes the multistep oxidation of betaestacin IV to produce several compounds, including betaestacins Va, Vb, Vc and VI. The sequence is that of Cytochrome P450 monooxygenase btcB from Colletotrichum orbiculare (strain 104-T / ATCC 96160 / CBS 514.97 / LARS 414 / MAFF 240422) (Cucumber anthracnose fungus).